A 220-amino-acid chain; its full sequence is Adenylate kinase (220 aa).

12 to 17 lines the ATP pocket; that stretch reads GAGKGT. The segment at 32-62 is NMP; that stretch reads STGDIFRDIVKKENDELGKKIKEIMEKGELV. Residues T33, R38, 60–62, 88–91, and Q95 contribute to the AMP site; these read ELV and GYPR. Residues 129 to 166 form an LID region; it reads SRRICPKCGRIYNMISLPPKEDELCDDCKVKLVQRDDD. R130 is a binding site for ATP. The Zn(2+) site is built by C133 and C136. ATP is bound at residue 139–140; the sequence is IY. Residues C153 and C156 each contribute to the Zn(2+) site. 2 residues coordinate AMP: R163 and R174. I202 serves as a coordination point for ATP.

This sequence belongs to the adenylate kinase family. In terms of assembly, monomer.

It localises to the cytoplasm. The catalysed reaction is AMP + ATP = 2 ADP. It participates in purine metabolism; AMP biosynthesis via salvage pathway; AMP from ADP: step 1/1. Functionally, catalyzes the reversible transfer of the terminal phosphate group between ATP and AMP. Plays an important role in cellular energy homeostasis and in adenine nucleotide metabolism. This chain is Adenylate kinase, found in Thermotoga neapolitana.